The chain runs to 279 residues: NADPH-dependent 7-cyano-7-deazaguanine reductase (279 aa).

Residue 86–88 participates in substrate binding; the sequence is IES. Residue 88–89 coordinates NADPH; sequence SK. The active-site Thioimide intermediate is Cys-187. Catalysis depends on Asp-194, which acts as the Proton donor. 226-227 contacts substrate; it reads HE. 255–256 provides a ligand contact to NADPH; it reads RG.

Belongs to the GTP cyclohydrolase I family. QueF type 2 subfamily. In terms of assembly, homodimer.

The protein localises to the cytoplasm. The catalysed reaction is 7-aminomethyl-7-carbaguanine + 2 NADP(+) = 7-cyano-7-deazaguanine + 2 NADPH + 3 H(+). Its pathway is tRNA modification; tRNA-queuosine biosynthesis. In terms of biological role, catalyzes the NADPH-dependent reduction of 7-cyano-7-deazaguanine (preQ0) to 7-aminomethyl-7-deazaguanine (preQ1). In Haemophilus influenzae (strain PittGG), this protein is NADPH-dependent 7-cyano-7-deazaguanine reductase.